Consider the following 418-residue polypeptide: MTIAEQIRTIAADARQAAIAMAKLPTTAKNDLLMAMAMALISNTPHLIDENRKDLEAGEKKGLSSAMLDRLMLDEARIKAMADGLREVAGLPDPVGEVTRMWKRPNNLMVGKMRIPLGVIGIIYEARPNVTADAAALCLKAGNSVILRGGSEAIHSNLAIARILGEEMERAGIPKAALSVIPFPEREGVLEMLKQEEFIDLIIPRGGESLIRFVVEHSKIPVIKHYKGVCHVFVDASADFDMAERIVVNAKVQRPGVCNALETLLIHKDVAEAFIPRIAATLTDLKVELRGDDCVRQFAPQAKKATEEDWQAEYLELILAVRVVDGLNEAIDHINAYGSLHTEAIVTRDYHNSQRFIREVNSSTVLVNASTRFADGNQLGLGAEIGISTTKLHSFGPMGLEDLTTTKFIVYGDGQVRQ.

This sequence belongs to the gamma-glutamyl phosphate reductase family.

The protein resides in the cytoplasm. It catalyses the reaction L-glutamate 5-semialdehyde + phosphate + NADP(+) = L-glutamyl 5-phosphate + NADPH + H(+). The protein operates within amino-acid biosynthesis; L-proline biosynthesis; L-glutamate 5-semialdehyde from L-glutamate: step 2/2. Its function is as follows. Catalyzes the NADPH-dependent reduction of L-glutamate 5-phosphate into L-glutamate 5-semialdehyde and phosphate. The product spontaneously undergoes cyclization to form 1-pyrroline-5-carboxylate. This is Gamma-glutamyl phosphate reductase from Geobacter metallireducens (strain ATCC 53774 / DSM 7210 / GS-15).